The primary structure comprises 591 residues: Pentatricopeptide repeat-containing protein At3g47530 (591 aa).

PPR repeat units lie at residues threonine 76–proline 110, asparagine 112–serine 146, aspartate 147–arginine 177, aspartate 178–aspartate 208, aspartate 216–glycine 250, alanine 251–arginine 281, asparagine 282–proline 316, glutamate 317–isoleucine 351, and asparagine 354–lysine 384. Positions isoleucine 389–glutamine 464 are type E motif. The tract at residues glycine 465–lysine 495 is type E(+) motif. Residues isoleucine 496–tryptophan 591 are type DYW motif.

Belongs to the PPR family. PCMP-H subfamily.

The chain is Pentatricopeptide repeat-containing protein At3g47530 (PCMP-H76) from Arabidopsis thaliana (Mouse-ear cress).